The following is a 404-amino-acid chain: Argininosuccinate synthase (404 aa).

ATP is bound by residues 13–21 and A41; that span reads AYSGGLDTS. L-citrulline is bound by residues Y93 and S98. Position 123 (G123) interacts with ATP. L-aspartate is bound by residues T125, N129, and D130. N129 lines the L-citrulline pocket. 5 residues coordinate L-citrulline: R133, S182, S191, E267, and Y279.

Belongs to the argininosuccinate synthase family. Type 1 subfamily. Homotetramer.

Its subcellular location is the cytoplasm. It catalyses the reaction L-citrulline + L-aspartate + ATP = 2-(N(omega)-L-arginino)succinate + AMP + diphosphate + H(+). It participates in amino-acid biosynthesis; L-arginine biosynthesis; L-arginine from L-ornithine and carbamoyl phosphate: step 2/3. The polypeptide is Argininosuccinate synthase (Moritella profunda).